The following is a 355-amino-acid chain: 4-dimethylallyltryptophan N-methyltransferase easF (355 aa).

This sequence belongs to the methyltransferase superfamily. In terms of assembly, homodimer.

It catalyses the reaction 4-(3-methylbut-2-enyl)-L-tryptophan + S-adenosyl-L-methionine = 4-(3-methylbut-2-enyl)-L-abrine + S-adenosyl-L-homocysteine + H(+). The protein operates within alkaloid biosynthesis; ergot alkaloid biosynthesis. 4-dimethylallyltryptophan N-methyltransferase; part of the gene cluster that mediates the biosynthesis of fungal ergot alkaloid. DmaW catalyzes the first step of ergot alkaloid biosynthesis by condensing dimethylallyl diphosphate (DMAP) and tryptophan to form 4-dimethylallyl-L-tryptophan. The second step is catalyzed by the methyltransferase easF that methylates 4-dimethylallyl-L-tryptophan in the presence of S-adenosyl-L-methionine, resulting in the formation of 4-dimethylallyl-L-abrine. The catalase easC and the FAD-dependent oxidoreductase easE then transform 4-dimethylallyl-L-abrine to chanoclavine-I which is further oxidized by easD in the presence of NAD(+), resulting in the formation of chanoclavine-I aldehyde. Agroclavine dehydrogenase easG then mediates the conversion of chanoclavine-I aldehyde to agroclavine via a non-enzymatic adduct reaction: the substrate is an iminium intermediate that is formed spontaneously from chanoclavine-I aldehyde in the presence of glutathione. Further conversion of agroclavine to paspalic acid is a two-step process involving oxidation of agroclavine to elymoclavine and of elymoclavine to paspalic acid, the second step being performed by the elymoclavine oxidase cloA. However, cloA does not encode a functional enzyme indicating that C.fusiformis terminates its ergot alkaloid pathway at elymoclavine. The chain is 4-dimethylallyltryptophan N-methyltransferase easF from Claviceps fusiformis (Ergot fungus).